The sequence spans 233 residues: Orotidine 5'-phosphate decarboxylase (233 aa).

Substrate is bound by residues Asp11, Lys34, 61 to 70, Thr117, Arg179, Gln189, Gly209, and Arg210; that span reads DLKLHDIPNT. Catalysis depends on Lys63, which acts as the Proton donor.

This sequence belongs to the OMP decarboxylase family. Type 1 subfamily. In terms of assembly, homodimer.

It catalyses the reaction orotidine 5'-phosphate + H(+) = UMP + CO2. It functions in the pathway pyrimidine metabolism; UMP biosynthesis via de novo pathway; UMP from orotate: step 2/2. Catalyzes the decarboxylation of orotidine 5'-monophosphate (OMP) to uridine 5'-monophosphate (UMP). This is Orotidine 5'-phosphate decarboxylase from Streptococcus agalactiae serotype V (strain ATCC BAA-611 / 2603 V/R).